The sequence spans 58 residues: Large ribosomal subunit protein uL30 (58 aa).

Belongs to the universal ribosomal protein uL30 family. In terms of assembly, part of the 50S ribosomal subunit.

The polypeptide is Large ribosomal subunit protein uL30 (Acinetobacter baumannii (strain AB307-0294)).